The following is a 621-amino-acid chain: 1-deoxy-D-xylulose-5-phosphate synthase (621 aa).

Thiamine diphosphate contacts are provided by residues histidine 80 and 121 to 123 (GHS). Aspartate 152 is a Mg(2+) binding site. Residues 153–154 (GA), asparagine 181, tyrosine 288, and glutamate 370 each bind thiamine diphosphate. Residue asparagine 181 participates in Mg(2+) binding.

The protein belongs to the transketolase family. DXPS subfamily. In terms of assembly, homodimer. Mg(2+) serves as cofactor. The cofactor is thiamine diphosphate.

The catalysed reaction is D-glyceraldehyde 3-phosphate + pyruvate + H(+) = 1-deoxy-D-xylulose 5-phosphate + CO2. It participates in metabolic intermediate biosynthesis; 1-deoxy-D-xylulose 5-phosphate biosynthesis; 1-deoxy-D-xylulose 5-phosphate from D-glyceraldehyde 3-phosphate and pyruvate: step 1/1. Catalyzes the acyloin condensation reaction between C atoms 2 and 3 of pyruvate and glyceraldehyde 3-phosphate to yield 1-deoxy-D-xylulose-5-phosphate (DXP). This chain is 1-deoxy-D-xylulose-5-phosphate synthase, found in Erwinia tasmaniensis (strain DSM 17950 / CFBP 7177 / CIP 109463 / NCPPB 4357 / Et1/99).